The following is a 262-amino-acid chain: CD99 antigen-like protein 2 (262 aa).

A signal peptide spans 1-25 (MVAWRSAFLVCLAFSLATLVQRGSG). Topologically, residues 26–185 (DFDDFNLEDA…PGSGMVAEPG (160 aa)) are extracellular. Residues 38 to 181 (ETSSVKQPWD…SNDDPGSGMV (144 aa)) are disordered. Low complexity-rich tracts occupy residues 49–60 (TTTTTTNRPGTT) and 98–119 (VTTT…GNDF). Basic and acidic residues-rich tracts occupy residues 125–136 (LDDRNDRDDGRR) and 159–168 (YKPDKGKGDG). A glycan (O-linked (Xyl...) (chondroitin sulfate) serine) is linked at Ser-178. A helical transmembrane segment spans residues 186 to 206 (TIAGVASALAMALIGAVSSYI). The Cytoplasmic segment spans residues 207–262 (SYQQKKFCFSIQQGLNADYVKGENLEAVVCEEPQVKYSTLHTQSAEPPPPPEPARI).

It belongs to the CD99 family. In terms of processing, O-glycosylated. In terms of tissue distribution, detected in cerebrospinal fluid (at protein level). Expressed in many tissues, with low expression in thymus.

The protein resides in the cell membrane. The protein localises to the cell junction. Its subcellular location is the secreted. In terms of biological role, plays a role in a late step of leukocyte extravasation helping cells to overcome the endothelial basement membrane. Acts at the same site as, but independently of, PECAM1. Homophilic adhesion molecule, but these interactions may not be required for cell aggregation. The protein is CD99 antigen-like protein 2 (CD99L2) of Homo sapiens (Human).